A 103-amino-acid polypeptide reads, in one-letter code: Putative membrane protein insertion efficiency factor (103 aa).

Residues 68–103 (HEGGYDPVPLAKQDAKPENNSESESLLNQPTETKSL) are disordered. The segment covering 87-103 (NSESESLLNQPTETKSL) has biased composition (polar residues).

Belongs to the UPF0161 family.

Its subcellular location is the cell inner membrane. Could be involved in insertion of integral membrane proteins into the membrane. In Idiomarina loihiensis (strain ATCC BAA-735 / DSM 15497 / L2-TR), this protein is Putative membrane protein insertion efficiency factor.